Consider the following 170-residue polypeptide: Adenine phosphoribosyltransferase (170 aa).

Belongs to the purine/pyrimidine phosphoribosyltransferase family. Homodimer.

It localises to the cytoplasm. It carries out the reaction AMP + diphosphate = 5-phospho-alpha-D-ribose 1-diphosphate + adenine. Its pathway is purine metabolism; AMP biosynthesis via salvage pathway; AMP from adenine: step 1/1. In terms of biological role, catalyzes a salvage reaction resulting in the formation of AMP, that is energically less costly than de novo synthesis. This chain is Adenine phosphoribosyltransferase, found in Cenarchaeum symbiosum (strain A).